Consider the following 396-residue polypeptide: Probable sugar efflux transporter (396 aa).

The next 12 membrane-spanning stretches (helical) occupy residues 15–35, 50–70, 81–101, 103–123, 136–156, 170–190, 209–229, 246–266, 275–295, 299–319, 333–353, and 364–384; these read VVTL…PVGL, VGIM…PFML, LICL…SWSF, VLVI…SITA, AQAL…GLPL, FFAI…LLPL, PALM…YTAY, FATA…VIFG, ALVS…LPAA, IHLG…GLGM, VAMA…ALVG, and MIGY…IIIF.

Belongs to the major facilitator superfamily. SotB (TC 2.A.1.2) family.

It localises to the cell inner membrane. Involved in the efflux of sugars. The physiological role may be the reduction of the intracellular concentration of toxic sugars or sugar metabolites. The protein is Probable sugar efflux transporter of Shigella boydii serotype 18 (strain CDC 3083-94 / BS512).